A 132-amino-acid chain; its full sequence is Agouti-signaling protein (132 aa).

Positions methionine 1–serine 22 are cleaved as a signal peptide. Residue asparagine 39 is glycosylated (N-linked (GlcNAc...) asparagine). The tract at residues lysine 60 to proline 88 is disordered. A compositionally biased stretch (basic and acidic residues) spans serine 63–methionine 79. Disulfide bonds link cysteine 93–cysteine 108, cysteine 100–cysteine 114, cysteine 107–cysteine 125, cysteine 111–cysteine 132, and cysteine 116–cysteine 123. Residues cysteine 93 to cysteine 132 form the Agouti domain.

The protein localises to the secreted. Functionally, involved in the regulation of melanogenesis. The binding of ASP to MC1R precludes alpha-MSH initiated signaling and thus blocks production of cAMP, leading to a down-regulation of eumelanogenesis (brown/black pigment) and thus increasing synthesis of pheomelanin (yellow/red pigment). The protein is Agouti-signaling protein (ASIP) of Macaca cyclopis (Taiwan macaque).